The chain runs to 211 residues: Uracil phosphoribosyltransferase (211 aa).

5-phospho-alpha-D-ribose 1-diphosphate-binding positions include R78, R103, and 130-138 (DPMLATGNS). Residues I193 and 198 to 200 (GDA) each bind uracil. A 5-phospho-alpha-D-ribose 1-diphosphate-binding site is contributed by D199.

Belongs to the UPRTase family. The cofactor is Mg(2+).

It catalyses the reaction UMP + diphosphate = 5-phospho-alpha-D-ribose 1-diphosphate + uracil. Its pathway is pyrimidine metabolism; UMP biosynthesis via salvage pathway; UMP from uracil: step 1/1. Allosterically activated by GTP. Its function is as follows. Catalyzes the conversion of uracil and 5-phospho-alpha-D-ribose 1-diphosphate (PRPP) to UMP and diphosphate. This chain is Uracil phosphoribosyltransferase, found in Acinetobacter baumannii (strain ATCC 17978 / DSM 105126 / CIP 53.77 / LMG 1025 / NCDC KC755 / 5377).